The sequence spans 189 residues: Elongation factor P 2 (189 aa).

This sequence belongs to the elongation factor P family.

It localises to the cytoplasm. It participates in protein biosynthesis; polypeptide chain elongation. Functionally, involved in peptide bond synthesis. Stimulates efficient translation and peptide-bond synthesis on native or reconstituted 70S ribosomes in vitro. Probably functions indirectly by altering the affinity of the ribosome for aminoacyl-tRNA, thus increasing their reactivity as acceptors for peptidyl transferase. This chain is Elongation factor P 2 (efp2), found in Lactobacillus johnsonii (strain CNCM I-12250 / La1 / NCC 533).